We begin with the raw amino-acid sequence, 1260 residues long: ATP-dependent helicase/deoxyribonuclease subunit B (1260 aa).

This sequence belongs to the helicase family. AddB/RexB type 2 subfamily. In terms of assembly, heterodimer of AddA and RexB. It depends on Mg(2+) as a cofactor.

Its function is as follows. The heterodimer acts as both an ATP-dependent DNA helicase and an ATP-dependent, dual-direction single-stranded exonuclease. Recognizes the chi site generating a DNA molecule suitable for the initiation of homologous recombination. This subunit has 5' -&gt; 3' nuclease activity but not helicase activity. In Limosilactobacillus reuteri (strain DSM 20016) (Lactobacillus reuteri), this protein is ATP-dependent helicase/deoxyribonuclease subunit B.